Reading from the N-terminus, the 144-residue chain is Granulocyte-macrophage colony-stimulating factor (144 aa).

Positions 1-17 (MWLQNLLLLGTVVCSFS) are cleaved as a signal peptide. Residue Ser-24 is glycosylated (O-linked (GalNAc...) serine). Residue Thr-27 is glycosylated (O-linked (GalNAc...) threonine). Asn-44 and Asn-54 each carry an N-linked (GlcNAc...) asparagine glycan. Cystine bridges form between Cys-71–Cys-113 and Cys-105–Cys-138.

The protein belongs to the GM-CSF family. Monomer. The signaling GM-CSF receptor complex is a dodecamer of two head-to-head hexamers of two alpha, two beta, and two ligand subunits.

It is found in the secreted. Cytokine that stimulates the growth and differentiation of hematopoietic precursor cells from various lineages, including granulocytes, macrophages, eosinophils and erythrocytes. This is Granulocyte-macrophage colony-stimulating factor (CSF2) from Cervus elaphus (Red deer).